The primary structure comprises 204 residues: Large ribosomal subunit protein mL67 (204 aa).

Belongs to the mitochondrion-specific ribosomal protein mL67 family.

It is found in the nucleus. The protein resides in the mitochondrion. Transcription factor involved in regulation of RNA polymerase II-dependent transcription. Also involved in regulation of mitochondrial DNA recombination, maintenance and repair, and generation of homoplasmic cells. The protein is Large ribosomal subunit protein mL67 (MHR1) of Yarrowia lipolytica (strain CLIB 122 / E 150) (Yeast).